The sequence spans 201 residues: Retinol-binding protein 4 (201 aa).

Residues Met1–Ala18 form the signal peptide. 3 disulfides stabilise this stretch: Cys22/Cys178, Cys88/Cys192, and Cys138/Cys147. Residue Gln116 participates in substrate binding. Arg139 is subject to Omega-N-methylarginine.

The protein belongs to the calycin superfamily. Lipocalin family. Interacts with TTR. Interaction with TTR prevents its loss by filtration through the kidney glomeruli. Interacts with STRA6.

The protein localises to the secreted. In terms of biological role, retinol-binding protein that mediates retinol transport in blood plasma. Delivers retinol from the liver stores to the peripheral tissues. Transfers the bound all-trans retinol to STRA6, that then facilitates retinol transport across the cell membrane. In Equus caballus (Horse), this protein is Retinol-binding protein 4 (RBP4).